The chain runs to 287 residues: tRNA-cytidine(32) 2-sulfurtransferase (287 aa).

A PP-loop motif motif is present at residues 39-44 (SGGKDS). The [4Fe-4S] cluster site is built by Cys-114, Cys-117, and Cys-205.

Belongs to the TtcA family. Homodimer. It depends on Mg(2+) as a cofactor. The cofactor is [4Fe-4S] cluster.

Its subcellular location is the cytoplasm. The enzyme catalyses cytidine(32) in tRNA + S-sulfanyl-L-cysteinyl-[cysteine desulfurase] + AH2 + ATP = 2-thiocytidine(32) in tRNA + L-cysteinyl-[cysteine desulfurase] + A + AMP + diphosphate + H(+). Its pathway is tRNA modification. Catalyzes the ATP-dependent 2-thiolation of cytidine in position 32 of tRNA, to form 2-thiocytidine (s(2)C32). The sulfur atoms are provided by the cysteine/cysteine desulfurase (IscS) system. The protein is tRNA-cytidine(32) 2-sulfurtransferase of Dechloromonas aromatica (strain RCB).